Here is a 519-residue protein sequence, read N- to C-terminus: Putative glucosylceramidase 4 (519 aa).

A signal peptide spans 1–24; that stretch reads MILNISVSLLIFLAFYGFSSDAKS. E256 functions as the Proton donor in the catalytic mechanism. The Nucleophile role is filled by E361.

Belongs to the glycosyl hydrolase 30 family.

The catalysed reaction is a beta-D-glucosylceramide + H2O = an N-acyl-sphingoid base + D-glucose. It carries out the reaction a beta-D-glucosyl-(1&lt;-&gt;1')-N-acylsphing-4-enine + H2O = an N-acylsphing-4-enine + D-glucose. It catalyses the reaction an N-acyl-1-beta-D-glucosyl-15-methylhexadecasphing-4-enine + H2O = an N-acyl-15-methylhexadecasphing-4-enine + D-glucose. It functions in the pathway lipid metabolism; sphingolipid metabolism. Its function is as follows. Glucosylceramidase that catalyzes the hydrolysis of glucosylceramides into free ceramides and glucose. C.elegans contains specific sphingoid bases, which are unique or different in structure compared to the sphingoid bases found in other animals. Two examples of these distinctive compounds are: 15-methylhexadecasphinganine and 15-methylhexadecasphing-4-enine. This is Putative glucosylceramidase 4 (gba-4) from Caenorhabditis elegans.